Reading from the N-terminus, the 348-residue chain is Dihydroorotase (348 aa).

Residues His14 and His16 each coordinate Zn(2+). Substrate-binding positions include His16–Arg18 and Asn42. 3 residues coordinate Zn(2+): Lys100, His137, and His175. Residue Lys100 is modified to N6-carboxylysine. His137 serves as a coordination point for substrate. Leu220 provides a ligand contact to substrate. Asp248 is a binding site for Zn(2+). The active site involves Asp248. 2 residues coordinate substrate: His252 and Ala264.

The protein belongs to the metallo-dependent hydrolases superfamily. DHOase family. Class II DHOase subfamily. In terms of assembly, homodimer. Requires Zn(2+) as cofactor.

It catalyses the reaction (S)-dihydroorotate + H2O = N-carbamoyl-L-aspartate + H(+). The protein operates within pyrimidine metabolism; UMP biosynthesis via de novo pathway; (S)-dihydroorotate from bicarbonate: step 3/3. Functionally, catalyzes the reversible cyclization of carbamoyl aspartate to dihydroorotate. The protein is Dihydroorotase of Ectopseudomonas mendocina (strain ymp) (Pseudomonas mendocina).